The primary structure comprises 107 residues: Glutaredoxin-1 (107 aa).

Position 2 is an N-acetylalanine (A2). In terms of domain architecture, Glutaredoxin spans 3 to 106; it reads QEFVNCKIQS…TRLKQIGALQ (104 aa). At K9 the chain carries N6-succinyllysine. 2 cysteine pairs are disulfide-bonded: C23-C26 and C79-C83.

The protein belongs to the glutaredoxin family.

The protein localises to the cytoplasm. Its function is as follows. Has a glutathione-disulfide oxidoreductase activity in the presence of NADPH and glutathione reductase. Reduces low molecular weight disulfides and proteins. The protein is Glutaredoxin-1 (Glrx) of Mus musculus (Mouse).